The following is a 235-amino-acid chain: tRNA (guanine-N(1)-)-methyltransferase (235 aa).

S-adenosyl-L-methionine is bound by residues glycine 112 and 132–137 (IGDYVL).

This sequence belongs to the RNA methyltransferase TrmD family. In terms of assembly, homodimer.

It localises to the cytoplasm. It catalyses the reaction guanosine(37) in tRNA + S-adenosyl-L-methionine = N(1)-methylguanosine(37) in tRNA + S-adenosyl-L-homocysteine + H(+). In terms of biological role, specifically methylates guanosine-37 in various tRNAs. The protein is tRNA (guanine-N(1)-)-methyltransferase of Cytophaga hutchinsonii (strain ATCC 33406 / DSM 1761 / CIP 103989 / NBRC 15051 / NCIMB 9469 / D465).